We begin with the raw amino-acid sequence, 222 residues long: Ornithine decarboxylase antizyme 1 (222 aa).

This sequence belongs to the ODC antizyme family. As to quaternary structure, interacts with ODC1 and thereby sterically blocks ODC homodimerization. Forms a ternary complex with PSMB4 and OAZ1 before PSMB4 is incorporated into the 20S proteasome. Interacts with AZIN2; this interaction disrupts the interaction between the antizyme and ODC1. Interacts with FAM171A1.

In terms of biological role, ornithine decarboxylase (ODC) antizyme protein that negatively regulates ODC activity and intracellular polyamine biosynthesis and uptake in response to increased intracellular polyamine levels. Binds to ODC monomers, inhibiting the assembly of the functional ODC homodimer, and targets the monomers for ubiquitin-independent proteolytic destruction by the 26S proteasome. Triggers ODC degradation by inducing the exposure of a cryptic proteasome-interacting surface of ODC. Stabilizes AZIN2 by interfering with its ubiquitination. Also inhibits cellular uptake of polyamines by inactivating the polyamine uptake transporter. SMAD1/OAZ1/PSMB4 complex mediates the degradation of the CREBBP/EP300 repressor SNIP1. Involved in the translocation of AZIN2 from ER-Golgi intermediate compartment (ERGIC) to the cytosol. The protein is Ornithine decarboxylase antizyme 1 (OAZ1) of Mesocricetus auratus (Golden hamster).